The following is a 249-amino-acid chain: 1-(5-phosphoribosyl)-5-[(5-phosphoribosylamino)methylideneamino] imidazole-4-carboxamide isomerase (249 aa).

D11 functions as the Proton acceptor in the catalytic mechanism. D133 acts as the Proton donor in catalysis.

Belongs to the HisA/HisF family.

Its subcellular location is the cytoplasm. The enzyme catalyses 1-(5-phospho-beta-D-ribosyl)-5-[(5-phospho-beta-D-ribosylamino)methylideneamino]imidazole-4-carboxamide = 5-[(5-phospho-1-deoxy-D-ribulos-1-ylimino)methylamino]-1-(5-phospho-beta-D-ribosyl)imidazole-4-carboxamide. Its pathway is amino-acid biosynthesis; L-histidine biosynthesis; L-histidine from 5-phospho-alpha-D-ribose 1-diphosphate: step 4/9. In Actinobacillus succinogenes (strain ATCC 55618 / DSM 22257 / CCUG 43843 / 130Z), this protein is 1-(5-phosphoribosyl)-5-[(5-phosphoribosylamino)methylideneamino] imidazole-4-carboxamide isomerase.